The following is a 152-amino-acid chain: Ubiquitin-conjugating enzyme E2 N (152 aa).

Residues Gly3 to Met149 form the UBC core domain. Lys82 carries the post-translational modification N6-acetyllysine. Catalysis depends on Cys87, which acts as the Glycyl thioester intermediate. Lys92 participates in a covalent cross-link: Glycyl lysine isopeptide (Lys-Gly) (interchain with G-Cter in ISG15).

This sequence belongs to the ubiquitin-conjugating enzyme family. Heterodimer with UBE2V2. Interacts (UBE2V2-UBE2N heterodimer) with the E3 ligase STUB1 (via the U-box domain); the complex has a specific 'Lys-63'-linked polyubiquitination activity. Interacts with RNF8 and RNF168. Interacts with RNF11. Interacts with the E3 ligases, HLTF and SHPRH; the interactions promote the 'Lys-63'-linked polyubiquitination of PCNA upon genotoxic stress and lead to DNA repair. Interacts with ARIH2 (via RING-type 2). Interacts with OTUB1; leading to inhibit E2-conjugating activity. Interacts with GPS2; leading to inhibit E2-conjugating activity. Interacts with RIGI and RNF135; involved in RIGI ubiquitination and activation. Conjugation to ISG15 impairs formation of the thioester bond with ubiquitin but not interaction with UBE2V2.

It catalyses the reaction S-ubiquitinyl-[E1 ubiquitin-activating enzyme]-L-cysteine + [E2 ubiquitin-conjugating enzyme]-L-cysteine = [E1 ubiquitin-activating enzyme]-L-cysteine + S-ubiquitinyl-[E2 ubiquitin-conjugating enzyme]-L-cysteine.. The protein operates within protein modification; protein ubiquitination. Activity is inhibited by binding to OTUB1, which prevents 'Lys-63'-linked polyubiquitination. Activity is inhibited by GPS2, leading to prevent 'Lys-63'-linked polyubiquitination. Functionally, the UBE2V1-UBE2N and UBE2V2-UBE2N heterodimers catalyze the synthesis of non-canonical 'Lys-63'-linked polyubiquitin chains. This type of polyubiquitination does not lead to protein degradation by the proteasome. Mediates transcriptional activation of target genes. Plays a role in the control of progress through the cell cycle and differentiation. Plays a role in the error-free DNA repair pathway and contributes to the survival of cells after DNA damage. Acts together with the E3 ligases, HLTF and SHPRH, in the 'Lys-63'-linked poly-ubiquitination of PCNA upon genotoxic stress, which is required for DNA repair. Appears to act together with E3 ligase RNF5 in the 'Lys-63'-linked polyubiquitination of JKAMP thereby regulating JKAMP function by decreasing its association with components of the proteasome and ERAD. Promotes TRIM5 capsid-specific restriction activity and the UBE2V1-UBE2N heterodimer acts in concert with TRIM5 to generate 'Lys-63'-linked polyubiquitin chains which activate the MAP3K7/TAK1 complex which in turn results in the induction and expression of NF-kappa-B and MAPK-responsive inflammatory genes. Together with RNF135 and UB2V1, catalyzes the viral RNA-dependent 'Lys-63'-linked polyubiquitination of RIGI to activate the downstream signaling pathway that leads to interferon beta production. UBE2V1-UBE2N together with TRAF3IP2 E3 ubiquitin ligase mediate 'Lys-63'-linked polyubiquitination of TRAF6, a component of IL17A-mediated signaling pathway. In Bos taurus (Bovine), this protein is Ubiquitin-conjugating enzyme E2 N (UBE2N).